We begin with the raw amino-acid sequence, 462 residues long: Glycoprotein endo-alpha-1,2-mannosidase (462 aa).

At 1-9 (MAKFRRRTC) the chain is on the cytoplasmic side. Residues 10–30 (ILLSLFILFIFSLMMGLKMLW) form a helical; Signal-anchor for type II membrane protein membrane-spanning segment. Residues 31 to 462 (PNAASFGPPF…YALDQQQPAS (432 aa)) are Lumenal-facing. The segment at 60 to 462 (DFQRSDRINM…YALDQQQPAS (403 aa)) is catalytic.

Belongs to the glycosyl hydrolase 99 family. Undergoes proteolytic cleavage in the C-terminal region.

The protein resides in the golgi apparatus membrane. It carries out the reaction N-{alpha-Glc-(1-&gt;3)-alpha-Man-(1-&gt;2)-alpha-Man-(1-&gt;2)-alpha-Man-(1-&gt;3)-[alpha-Man-(1-&gt;2)-alpha-Man-(1-&gt;3)-[alpha-Man-(1-&gt;2)-alpha-Man-(1-&gt;6)]-alpha-Man-(1-&gt;6)]-beta-Man-(1-&gt;4)-beta-GlcNAc-(1-&gt;4)-beta-GlcNAc}-L-asparaginyl-[protein] + H2O = alpha-D-glucosyl-(1-&gt;3)-D-mannopyranose + N(4)-{alpha-D-Man-(1-&gt;2)-alpha-D-Man-(1-&gt;3)-[alpha-D-Man-(1-&gt;2)-alpha-D-Man-(1-&gt;3)-[alpha-D-Man-(1-&gt;2)-alpha-D-Man-(1-&gt;6)]-alpha-D-Man-(1-&gt;6)]-beta-D-Man-(1-&gt;4)-beta-D-GlaNAc-(1-&gt;4)-beta-D-GlcNAc}-L-asparaginyl-[protein] (N-glucan mannose isomer 8A1,2,3B1,2). The chain is Glycoprotein endo-alpha-1,2-mannosidase (Manea) from Mus musculus (Mouse).